The primary structure comprises 609 residues: Probable G-protein coupled receptor 153 (609 aa).

Residues 1-11 (MSDERRLPGSA) lie on the Extracellular side of the membrane. The chain crosses the membrane as a helical span at residues 12-32 (VGWLVCGGLSLLANAWGILSV). The Cytoplasmic segment spans residues 33–41 (GAKQKKWKP). The helical transmembrane segment at 42 to 62 (LEFLLCTLAATHMLNVAVPIA) threads the bilayer. Residues 63-84 (TYSVVQLRRQRPDFEWNEGLCK) are Extracellular-facing. The chain crosses the membrane as a helical span at residues 85–105 (VFVSTFYTLTLATCFSVTSLS). The Cytoplasmic segment spans residues 106 to 126 (YHRMWMVCWPVNYRLSNAKKQ). A helical transmembrane segment spans residues 127–147 (AVHTVMGIWMVSFILSALPAV). Residues 148 to 175 (GWHDTSERFYTHGCRFIVAEIGLGFGVC) are Extracellular-facing. A helical membrane pass occupies residues 176–196 (FLLLVGGSVAMGVICTAIALF). At 197-243 (QTLAVQVGRQADRRAFTVPTIVVEDAQGKRRSSIDGSEPAKTSLQTT) the chain is on the cytoplasmic side. A helical transmembrane segment spans residues 244–264 (GLVTTIVFIYDCLMGFPVLVV). Topologically, residues 265–276 (SFSSLRADASAP) are extracellular. Residues 277 to 297 (WMALCVLWCSVAQALLLPVFL) traverse the membrane as a helical segment. Residues 298–609 (WACDRYRADL…LHSDSLGSAS (312 aa)) lie on the Cytoplasmic side of the membrane. Disordered regions lie at residues 446 to 496 (DAPP…SASA) and 514 to 609 (ALRR…GSAS). Composition is skewed to low complexity over residues 458 to 479 (ESLL…RDSP) and 527 to 536 (AAPDGADPGE). A compositionally biased stretch (gly residues) spans 571 to 583 (EPGGLRAAGGGGS). Over residues 584–596 (TSSFLSSPSESSG) the composition is skewed to low complexity.

Belongs to the G-protein coupled receptor 1 family.

It is found in the cell membrane. Its function is as follows. Orphan receptor. This chain is Probable G-protein coupled receptor 153 (GPR153), found in Homo sapiens (Human).